A 108-amino-acid polypeptide reads, in one-letter code: Con-Ins K1 (108 aa).

Residues 1-24 form the signal peptide; it reads MTTSSYFLLVALGLLLYVCQSSFG. The propeptide occupies 25–28; it reads SPHT. Cystine bridges form between cysteine 41-cysteine 90, cysteine 53-cysteine 103, and cysteine 89-cysteine 94. A 4-carboxyglutamate modification is found at glutamate 44. Residues 57–83 constitute a propeptide, c peptide; the sequence is RKRRGFPSMLKARAKRNEAFLLQRDGR. Glutamate 87 bears the 4-carboxyglutamate mark. Glutamine 107 is subject to Glutamine amide.

Belongs to the insulin family. In terms of assembly, heterodimer of A and B chains; disulfide-linked. As to expression, expressed by the venom gland.

The protein localises to the secreted. In terms of biological role, this venom insulin, from a fish-hunting cone snail, facilitates prey capture by rapidly inducing hypoglycemic shock. It is one of the smallest known insulin found in nature and lacks the C-terminal segment of the B chain that, in human insulin, mediates engagement of the insulin receptor (INSR) and assembly of the hormone's hexameric storage form. Despite lacking this segment, it both binds and activates human insulin receptor (long isoform (HIR-B)) with a moderate potency (EC(50)=30.45 nM). In vivo, intraperitoneal injection of this peptide into zebrafish lowers blood glucose with a lower potency than human insulin. In addition, when applied to water, this peptide reduces overall locomotor activity of zebrafish larvae, observed as a significant decrease in the percentage of time spent swimming and movement frequency. When tested on a mouse model of diabetes, this insulin also lowers blood glucose with a 20-fold lower potency than human insulin. The sequence is that of Con-Ins K1 from Conus kinoshitai (Kinoshita's cone).